The sequence spans 518 residues: Subtilisin-like serine protease Cla h 9.0101 (518 aa).

The first 16 residues, 1–16 (MRGALAGLSLATLATA), serve as a signal peptide directing secretion. Positions 17 to 138 (SPVLVNSIHN…ERDQEVHVLG (122 aa)) are cleaved as a propeptide — removed in mature form. In terms of domain architecture, Inhibitor I9 spans 44–136 (YMIKFKDHVT…LVERDQEVHV (93 aa)). Residues 148–454 (PWGLARISHR…GGESNYSAIV (307 aa)) form the Peptidase S8 domain. Catalysis depends on charge relay system residues Asp-184 and His-216. The igE-binding stretch occupies residues 244 to 298 (RSNGSGSMSDVVKGVEYAAESHLEQVSITKKGKRKGFKGSTANMSLGGGKSPILD). Asn-246 and Asn-286 each carry an N-linked (GlcNAc...) asparagine glycan. Ser-382 serves as the catalytic Charge relay system. Asn-449 is a glycosylation site (N-linked (GlcNAc...) asparagine). A propeptide spans 460–518 (KATHRPTMLEEIESEAKVASKKVYSEGDELAHKVAELTEKVEDLIAGELKDMFRELKRE) (removed in mature form).

Belongs to the peptidase S8 family.

Functionally, serine protease. This Davidiella tassiana (Mycosphaerella tassiana) protein is Subtilisin-like serine protease Cla h 9.0101.